A 278-amino-acid polypeptide reads, in one-letter code: Putative transcription factor kapC (278 aa).

The segment covering Met-1–His-10 has biased composition (pro residues). Residues Met-1–Arg-121 form a disordered region. The span at Pro-56 to Ile-68 shows a compositional bias: polar residues. Residues Pro-103–Leu-166 form the bZIP domain. Residues Leu-104–Tyr-127 form a basic motif region. Low complexity predominate over residues Arg-109–Ala-119. The tract at residues Leu-131–Leu-162 is leucine-zipper. Residues Val-173–Ser-278 are disordered. The segment covering Pro-198–Gln-214 has biased composition (low complexity). Residues Val-215–Asn-226 are compositionally biased toward polar residues. Positions Gly-254–Pro-269 are enriched in basic and acidic residues.

The protein belongs to the bZIP family.

It localises to the nucleus. Its function is as follows. Putative transcription factor. This is Putative transcription factor kapC (kapC) from Emericella nidulans (strain FGSC A4 / ATCC 38163 / CBS 112.46 / NRRL 194 / M139) (Aspergillus nidulans).